Consider the following 285-residue polypeptide: 4-hydroxybenzoate octaprenyltransferase (285 aa).

7 helical membrane-spanning segments follow: residues 17 to 37, 41 to 61, 92 to 112, 135 to 155, 158 to 178, 216 to 236, and 263 to 283; these read PVGI…AGAG, PKVL…GCVI, LLLF…LNPL, HWPQ…AFAA, GTVP…ATVY, ALLL…YYYL, and AFLN…LHYL.

This sequence belongs to the UbiA prenyltransferase family. The cofactor is Mg(2+).

It is found in the cell inner membrane. It carries out the reaction all-trans-octaprenyl diphosphate + 4-hydroxybenzoate = 4-hydroxy-3-(all-trans-octaprenyl)benzoate + diphosphate. It participates in cofactor biosynthesis; ubiquinone biosynthesis. Functionally, catalyzes the prenylation of para-hydroxybenzoate (PHB) with an all-trans polyprenyl group. Mediates the second step in the final reaction sequence of ubiquinone-8 (UQ-8) biosynthesis, which is the condensation of the polyisoprenoid side chain with PHB, generating the first membrane-bound Q intermediate 3-octaprenyl-4-hydroxybenzoate. The protein is 4-hydroxybenzoate octaprenyltransferase of Nitrosococcus oceani (strain ATCC 19707 / BCRC 17464 / JCM 30415 / NCIMB 11848 / C-107).